The primary structure comprises 91 residues: Probable insulin-like peptide gamma-type 1 (91 aa).

The N-terminal stretch at 1 to 26 (MSSYRQTLFILIILIVIILFVNEGQG) is a signal peptide. Disulfide bonds link Cys-37–Cys-66, Cys-49–Cys-79, and Cys-65–Cys-70.

This sequence belongs to the insulin family.

It is found in the secreted. The sequence is that of Probable insulin-like peptide gamma-type 1 (ins-11) from Caenorhabditis elegans.